Here is a 183-residue protein sequence, read N- to C-terminus: Regulatory protein RecX (183 aa).

Positions M1–S12 are enriched in polar residues. The segment at M1–A26 is disordered.

This sequence belongs to the RecX family.

It is found in the cytoplasm. Its function is as follows. Modulates RecA activity. This chain is Regulatory protein RecX, found in Mycobacterium sp. (strain JLS).